The following is a 188-amino-acid chain: CyanoP (188 aa).

The first 23 residues, 1–23 (MLKKSLSTAVVLVTLLLSFTLTA), serve as a signal peptide directing secretion. Cys-24 carries the N-palmitoyl cysteine lipid modification. Cys-24 carries S-diacylglycerol cysteine lipidation.

Belongs to the PsbP family. CyanoP subfamily. Monomer. Present in about 3% of photosystem II (PSII) preparations. Purifies with partially assembled PSII complexes, in addition to a small amount of monomeric and dimeric PSII, and trimeric PSI.

The protein resides in the cellular thylakoid membrane. Functionally, plays a role in the early stages of photosystem II (PSII) assembly; binds to D2 (psbD) and may facilitate its incorporation into PSII. Required for optimal photoautotrophic growth in the absence of Ca(2+) or Cl(-), functions in optimizing PSII water oxidation/O(2) evolving activity. Might be involved in assembly of the oxygen evolving complex. In Synechocystis sp. (strain ATCC 27184 / PCC 6803 / Kazusa), this protein is CyanoP.